Here is a 590-residue protein sequence, read N- to C-terminus: (+)-sabinene synthase, chloroplastic (590 aa).

The N-terminal 51 residues, 1 to 51 (MSSISINIAMPLNSLHNFERKPSKAWSTSCTAPAARLRASSSLQQEKPHQI), are a transit peptide targeting the chloroplast. Mg(2+) contacts are provided by D343, D347, D487, T491, and E495. Residues 343-347 (DDVYD) carry the DDXXD motif motif.

This sequence belongs to the terpene synthase family. Monomer. The cofactor is Mg(2+).

Its subcellular location is the plastid. The protein localises to the chloroplast. The enzyme catalyses (2E)-geranyl diphosphate = (1R,5R)-sabinene + diphosphate. It functions in the pathway terpene metabolism; sabinene hydrate biosynthesis. In terms of biological role, catalyzes the formation of the (-)-3-isothujone precursor sabinene from geranyl diphosphate. The enzyme also produces significant amounts of gamma-terpinene, terpinolene and limonene. This chain is (+)-sabinene synthase, chloroplastic, found in Salvia officinalis (Sage).